The chain runs to 457 residues: Siroheme synthase (457 aa).

The interval 1-204 (MDHLPIFCQL…NDQKAITETT (204 aa)) is precorrin-2 dehydrogenase /sirohydrochlorin ferrochelatase. NAD(+) is bound by residues 22–23 (DV) and 43–44 (LA). Ser-128 carries the post-translational modification Phosphoserine. The segment at 216–457 (GEVVLVGAGP…RDKLNWFSNH (242 aa)) is uroporphyrinogen-III C-methyltransferase. Residue Pro-225 participates in S-adenosyl-L-methionine binding. Asp-248 acts as the Proton acceptor in catalysis. Residue Lys-270 is the Proton donor of the active site. S-adenosyl-L-methionine is bound by residues 301-303 (GGD), Ile-306, 331-332 (TA), Met-382, and Gly-411.

The protein in the N-terminal section; belongs to the precorrin-2 dehydrogenase / sirohydrochlorin ferrochelatase family. In the C-terminal section; belongs to the precorrin methyltransferase family.

It catalyses the reaction uroporphyrinogen III + 2 S-adenosyl-L-methionine = precorrin-2 + 2 S-adenosyl-L-homocysteine + H(+). The catalysed reaction is precorrin-2 + NAD(+) = sirohydrochlorin + NADH + 2 H(+). It carries out the reaction siroheme + 2 H(+) = sirohydrochlorin + Fe(2+). Its pathway is cofactor biosynthesis; adenosylcobalamin biosynthesis; precorrin-2 from uroporphyrinogen III: step 1/1. It functions in the pathway cofactor biosynthesis; adenosylcobalamin biosynthesis; sirohydrochlorin from precorrin-2: step 1/1. It participates in porphyrin-containing compound metabolism; siroheme biosynthesis; precorrin-2 from uroporphyrinogen III: step 1/1. The protein operates within porphyrin-containing compound metabolism; siroheme biosynthesis; siroheme from sirohydrochlorin: step 1/1. Its pathway is porphyrin-containing compound metabolism; siroheme biosynthesis; sirohydrochlorin from precorrin-2: step 1/1. Its function is as follows. Multifunctional enzyme that catalyzes the SAM-dependent methylations of uroporphyrinogen III at position C-2 and C-7 to form precorrin-2 via precorrin-1. Then it catalyzes the NAD-dependent ring dehydrogenation of precorrin-2 to yield sirohydrochlorin. Finally, it catalyzes the ferrochelation of sirohydrochlorin to yield siroheme. This Escherichia coli O157:H7 (strain EC4115 / EHEC) protein is Siroheme synthase.